The chain runs to 193 residues: ATP-dependent Clp protease proteolytic subunit 1 (193 aa).

The active-site Nucleophile is the Ser98. The active site involves His123.

It belongs to the peptidase S14 family. Fourteen ClpP subunits assemble into 2 heptameric rings which stack back to back to give a disk-like structure with a central cavity, resembling the structure of eukaryotic proteasomes.

The protein resides in the cytoplasm. The enzyme catalyses Hydrolysis of proteins to small peptides in the presence of ATP and magnesium. alpha-casein is the usual test substrate. In the absence of ATP, only oligopeptides shorter than five residues are hydrolyzed (such as succinyl-Leu-Tyr-|-NHMec, and Leu-Tyr-Leu-|-Tyr-Trp, in which cleavage of the -Tyr-|-Leu- and -Tyr-|-Trp bonds also occurs).. Its function is as follows. Cleaves peptides in various proteins in a process that requires ATP hydrolysis. Has a chymotrypsin-like activity. Plays a major role in the degradation of misfolded proteins. The polypeptide is ATP-dependent Clp protease proteolytic subunit 1 (Bacillus cereus (strain ZK / E33L)).